Consider the following 480-residue polypeptide: Uridine/deoxyuridine transporter (480 aa).

A run of 14 helical transmembrane segments spans residues 14-34 (VGSI…FQLN), 55-75 (SIAL…LFLP), 93-113 (LTMI…LMIG), 115-135 (ILQG…HVKV), 147-167 (ILTS…GWLV), 174-194 (SVFF…SFGT), 207-227 (WTGV…VNAL), 239-259 (WLLA…FWQV), 280-300 (GLLI…NGII), 320-340 (LVTL…SGFL), 358-378 (IIGI…LLLL), 382-402 (FIGI…GIVL), 417-437 (GMFN…PTVL), and 449-469 (ISGI…SFLI).

The protein belongs to the major facilitator superfamily. EmrB family.

Its subcellular location is the cell membrane. In terms of biological role, responsible for the uptake of uridine and deoxyuridine. Not involved in purine nucleoside uptake. The polypeptide is Uridine/deoxyuridine transporter (Lactococcus lactis subsp. cremoris (strain MG1363)).